The sequence spans 214 residues: Large ribosomal subunit protein uL3 (214 aa).

The interval Lys131–Gln153 is disordered. Residues Ser132–Val145 are compositionally biased toward polar residues. Residue Gln153 is modified to N5-methylglutamine.

This sequence belongs to the universal ribosomal protein uL3 family. In terms of assembly, part of the 50S ribosomal subunit. Forms a cluster with proteins L14 and L19. Methylated by PrmB.

In terms of biological role, one of the primary rRNA binding proteins, it binds directly near the 3'-end of the 23S rRNA, where it nucleates assembly of the 50S subunit. This Thiobacillus denitrificans (strain ATCC 25259 / T1) protein is Large ribosomal subunit protein uL3.